The primary structure comprises 446 residues: Argininosuccinate lyase (446 aa).

It belongs to the lyase 1 family. Argininosuccinate lyase subfamily.

The protein localises to the cytoplasm. It catalyses the reaction 2-(N(omega)-L-arginino)succinate = fumarate + L-arginine. The protein operates within amino-acid biosynthesis; L-arginine biosynthesis; L-arginine from L-ornithine and carbamoyl phosphate: step 3/3. The sequence is that of Argininosuccinate lyase from Bacteroides thetaiotaomicron (strain ATCC 29148 / DSM 2079 / JCM 5827 / CCUG 10774 / NCTC 10582 / VPI-5482 / E50).